A 590-amino-acid polypeptide reads, in one-letter code: Protein Spindly (590 aa).

Residues 1–401 (MSDLEDEIKV…SMARMKALSE (401 aa)) adopt a coiled-coil conformation. Positions 446–590 (NKAQVQKRRR…KTMANECAQQ (145 aa)) are disordered. 2 stretches are compositionally biased toward basic and acidic residues: residues 483-497 (SNEKAEEKTPSHPVE) and 518-527 (RESKSVRICE). 2 stretches are compositionally biased toward polar residues: residues 541 to 554 (VNDSNSKNVDQTHQ) and 572 to 590 (QQPTHVSSQKTMANECAQQ).

It belongs to the Spindly family.

The protein resides in the chromosome. It localises to the centromere. It is found in the kinetochore. Required for the localization of dynein and dynactin to the mitotic kintochore. Dynein is believed to control the initial lateral interaction between the kinetochore and spindle microtubules and to facilitate the subsequent formation of end-on kinetochore-microtubule attachments mediated by the NDC80 complex. May act as an adapter protein linking the dynein motor complex to various cargos. This Danio rerio (Zebrafish) protein is Protein Spindly (spdl1).